A 377-amino-acid chain; its full sequence is All-trans-retinol dehydrogenase [NAD(+)] ADH4 (377 aa).

Zn(2+) is bound at residue cysteine 47. An NAD(+)-binding site is contributed by 48–49 (PT). 6 residues coordinate Zn(2+): histidine 68, cysteine 98, cysteine 101, cysteine 104, cysteine 112, and cysteine 179. NAD(+) is bound by residues 204-209 (GLGCVG), aspartate 228, lysine 233, 297-299 (VGA), 320-322 (TFF), and arginine 372.

The protein belongs to the zinc-containing alcohol dehydrogenase family. Class-II subfamily. As to quaternary structure, dimer. Zn(2+) is required as a cofactor. In terms of tissue distribution, liver specific.

Its subcellular location is the cytoplasm. It carries out the reaction all-trans-retinol + NAD(+) = all-trans-retinal + NADH + H(+). It catalyses the reaction 9-cis-retinol + NAD(+) = 9-cis-retinal + NADH + H(+). The enzyme catalyses 20-oxo-(5Z,8Z,11Z,14Z)-eicosatetraenoate + NAD(+) + H2O = (5Z,8Z,11Z,14Z)-eicosatetraenedioate + NADH + 2 H(+). The catalysed reaction is 20-hydroxy-(5Z,8Z,11Z,14Z)-eicosatetraenoate + NAD(+) = 20-oxo-(5Z,8Z,11Z,14Z)-eicosatetraenoate + NADH + H(+). It carries out the reaction 1,4-benzoquinone + NADH + H(+) = hydroquinone + NAD(+). Its activity is regulated as follows. Oxidation of 20-HETE is inhibited by low concentrations of N-heptylformamide. Oxidation of 20-HETE is a decreased by 55-65% by either all-trans-retinol or all-trans-retinoic acid. Strongly inhibited by omega-hydroxy fatty acids. Catalyzes the NAD-dependent oxidation of either all-trans-retinol or 9-cis-retinol. Also oxidizes long chain omega-hydroxy fatty acids, such as 20-HETE, producing both the intermediate aldehyde, 20-oxoarachidonate and the end product, a dicarboxylic acid, (5Z,8Z,11Z,14Z)-eicosatetraenedioate. Also catalyzes the reduction of benzoquinones. The sequence is that of All-trans-retinol dehydrogenase [NAD(+)] ADH4 from Rattus norvegicus (Rat).